Here is a 497-residue protein sequence, read N- to C-terminus: Proline--tRNA ligase (497 aa).

The protein belongs to the class-II aminoacyl-tRNA synthetase family. ProS type 3 subfamily. In terms of assembly, homodimer.

It localises to the cytoplasm. It carries out the reaction tRNA(Pro) + L-proline + ATP = L-prolyl-tRNA(Pro) + AMP + diphosphate. In terms of biological role, catalyzes the attachment of proline to tRNA(Pro) in a two-step reaction: proline is first activated by ATP to form Pro-AMP and then transferred to the acceptor end of tRNA(Pro). The polypeptide is Proline--tRNA ligase (Deinococcus geothermalis (strain DSM 11300 / CIP 105573 / AG-3a)).